The chain runs to 105 residues: Small ribosomal subunit protein bS20 (105 aa).

This sequence belongs to the bacterial ribosomal protein bS20 family.

In terms of biological role, binds directly to 16S ribosomal RNA. The chain is Small ribosomal subunit protein bS20 from Moorella thermoacetica (strain ATCC 39073 / JCM 9320).